The primary structure comprises 295 residues: G1/S-specific cyclin-D1 (295 aa).

One can recognise a Cyclin N-terminal domain in the interval 28–152; it reads LRAMLKTEET…LLVNKLKWNL (125 aa). Residue K269 forms a Glycyl lysine isopeptide (Lys-Gly) (interchain with G-Cter in ubiquitin) linkage. The segment at 269–295 is disordered; the sequence is KATEEEGEVEEEAGLACTPTDVRDVDI. The residue at position 286 (T286) is a Phosphothreonine.

The protein belongs to the cyclin family. Cyclin D subfamily. Interacts with either CDK4 or CDK6 protein kinase to form a serine/threonine kinase holoenzyme complex. The cyclin subunit imparts substrate specificity to the complex. Component of the ternary complex CCND1/CDK4/CDKN1B required for nuclear translocation and modulation of CDK4-mediated kinase activity. Interacts directly with CDKN1B. Can form similar complexes with either CDKN1A or CDKN2A. Interacts with UHRF2; the interaction ubiquitinates CCND1 and appears to occur independently of phosphorylation. Interacts with USP2. Interacts (via cyclin N-terminal domain) with INSM1 (via N-terminal region); the interaction competes with the binding of CCND1 to CDK4 during cell cycle progression and inhibits CDK4 activity. Interacts with CDK4; the interaction is prevented with the binding of CCND1 to INSM1 during cell cycle progression. Phosphorylation at Thr-286 by MAP kinases is required for ubiquitination and degradation by the DCX(AMBRA1) complex. It also plays an essential role for recognition by the FBXO31 component of SCF (SKP1-cullin-F-box) protein ligase complex following DNA damage. Post-translationally, ubiquitinated at Lys-269 by the DCX(AMBRA1) complex during the transition from G1 to S cell phase, leading to its degradation: ubiquitination is dependent on Thr-286 phosphorylation. The DCX(AMBRA1) complex represents the major regulator of CCND1 stability during the G1/S transition. Also ubiquitinated by the SCF(FBXO4) and Cul7-RING(FBXW8) ubiquitin-protein ligase complexes. Following DNA damage it is ubiquitinated by the SCF(FBXO31) protein ligase complex. SCF(FBXO31) ubiquitination is dependent on Thr-286 phosphorylation. Ubiquitinated also by UHRF2 apparently in a phosphorylation-independent manner. Ubiquitination leads to its degradation and G1 arrest. Deubiquitinated by USP2; leading to its stabilization.

The protein localises to the nucleus. It is found in the cytoplasm. It localises to the nucleus membrane. In terms of biological role, regulatory component of the cyclin D1-CDK4 (DC) complex that phosphorylates and inhibits members of the retinoblastoma (RB) protein family including RB1 and regulates the cell-cycle during G(1)/S transition. Phosphorylation of RB1 allows dissociation of the transcription factor E2F from the RB/E2F complex and the subsequent transcription of E2F target genes which are responsible for the progression through the G(1) phase. Hypophosphorylates RB1 in early G(1) phase. Cyclin D-CDK4 complexes are major integrators of various mitogenenic and antimitogenic signals. Also a substrate for SMAD3, phosphorylating SMAD3 in a cell-cycle-dependent manner and repressing its transcriptional activity. Component of the ternary complex, cyclin D1/CDK4/CDKN1B, required for nuclear translocation and activity of the cyclin D-CDK4 complex. Exhibits transcriptional corepressor activity with INSM1 on the NEUROD1 and INS promoters in a cell cycle-independent manner. The chain is G1/S-specific cyclin-D1 (Ccnd1) from Rattus norvegicus (Rat).